Reading from the N-terminus, the 349-residue chain is Alanine racemase (349 aa).

The active-site Proton acceptor; specific for D-alanine is Lys-35. The residue at position 35 (Lys-35) is an N6-(pyridoxal phosphate)lysine. Residue Arg-130 participates in substrate binding. Tyr-244 acts as the Proton acceptor; specific for L-alanine in catalysis. Met-292 provides a ligand contact to substrate.

The protein belongs to the alanine racemase family. Requires pyridoxal 5'-phosphate as cofactor.

It catalyses the reaction L-alanine = D-alanine. It participates in amino-acid biosynthesis; D-alanine biosynthesis; D-alanine from L-alanine: step 1/1. In terms of biological role, catalyzes the interconversion of L-alanine and D-alanine. May also act on other amino acids. The sequence is that of Alanine racemase (alr) from Cereibacter sphaeroides (strain ATCC 17025 / ATH 2.4.3) (Rhodobacter sphaeroides).